The primary structure comprises 117 residues: Ribonuclease P protein component (117 aa).

Belongs to the RnpA family. In terms of assembly, consists of a catalytic RNA component (M1 or rnpB) and a protein subunit.

It catalyses the reaction Endonucleolytic cleavage of RNA, removing 5'-extranucleotides from tRNA precursor.. Its function is as follows. RNaseP catalyzes the removal of the 5'-leader sequence from pre-tRNA to produce the mature 5'-terminus. It can also cleave other RNA substrates such as 4.5S RNA. The protein component plays an auxiliary but essential role in vivo by binding to the 5'-leader sequence and broadening the substrate specificity of the ribozyme. This Limosilactobacillus reuteri subsp. reuteri (strain JCM 1112) (Lactobacillus reuteri) protein is Ribonuclease P protein component.